Here is an 82-residue protein sequence, read N- to C-terminus: Defensin-like protein 275 (82 aa).

The first 23 residues, 1 to 23, serve as a signal peptide directing secretion; it reads MALSKFQLVALLITYTLLFSCQS. Intrachain disulfides connect Cys36–Cys78, Cys42–Cys65, Cys48–Cys76, and Cys52–Cys77.

It belongs to the DEFL family.

The protein localises to the secreted. The chain is Defensin-like protein 275 from Arabidopsis thaliana (Mouse-ear cress).